Consider the following 478-residue polypeptide: ATP synthase subunit beta (478 aa).

Position 155–162 (155–162) interacts with ATP; it reads GGAGVGKT.

This sequence belongs to the ATPase alpha/beta chains family. In terms of assembly, F-type ATPases have 2 components, CF(1) - the catalytic core - and CF(0) - the membrane proton channel. CF(1) has five subunits: alpha(3), beta(3), gamma(1), delta(1), epsilon(1). CF(0) has three main subunits: a(1), b(2) and c(9-12). The alpha and beta chains form an alternating ring which encloses part of the gamma chain. CF(1) is attached to CF(0) by a central stalk formed by the gamma and epsilon chains, while a peripheral stalk is formed by the delta and b chains.

The protein resides in the cell inner membrane. It catalyses the reaction ATP + H2O + 4 H(+)(in) = ADP + phosphate + 5 H(+)(out). Its function is as follows. Produces ATP from ADP in the presence of a proton gradient across the membrane. The catalytic sites are hosted primarily by the beta subunits. This chain is ATP synthase subunit beta, found in Fuscovulum blasticum (Rhodobacter blasticus).